Consider the following 445-residue polypeptide: 3-phosphoshikimate 1-carboxyvinyltransferase (445 aa).

A disordered region spans residues 1–25; sequence MSGHGPAQPMTARRSGPLKGRAEIP. Positions 28, 29, and 33 each coordinate 3-phosphoshikimate. Residue Lys-28 participates in phosphoenolpyruvate binding. Phosphoenolpyruvate contacts are provided by Gly-101 and Arg-129. 3-phosphoshikimate is bound by residues Ser-174, Gln-176, Asp-326, and Lys-353. Phosphoenolpyruvate is bound at residue Gln-176. Residue Asp-326 is the Proton acceptor of the active site. Phosphoenolpyruvate-binding residues include Arg-357 and Arg-400.

It belongs to the EPSP synthase family. As to quaternary structure, monomer.

The protein localises to the cytoplasm. It carries out the reaction 3-phosphoshikimate + phosphoenolpyruvate = 5-O-(1-carboxyvinyl)-3-phosphoshikimate + phosphate. It functions in the pathway metabolic intermediate biosynthesis; chorismate biosynthesis; chorismate from D-erythrose 4-phosphate and phosphoenolpyruvate: step 6/7. In terms of biological role, catalyzes the transfer of the enolpyruvyl moiety of phosphoenolpyruvate (PEP) to the 5-hydroxyl of shikimate-3-phosphate (S3P) to produce enolpyruvyl shikimate-3-phosphate and inorganic phosphate. This chain is 3-phosphoshikimate 1-carboxyvinyltransferase, found in Cereibacter sphaeroides (strain ATCC 17029 / ATH 2.4.9) (Rhodobacter sphaeroides).